The primary structure comprises 164 residues: MAKNSNKVKKNTNKANNFKLLADNRYAKFQYAISETIEAGIELLGTEVKSIRNGKANLRDGYCSFRDGEILLLNVHISPHKNVGSFFNHDPLRNRKLLLHKKEIIKMKSNTEKKGMTIVPLSLYLKGSWIKLTIGVGKGKKLHDKRQDEKQKSIKKEINSALKR.

The segment at 141-164 (KLHDKRQDEKQKSIKKEINSALKR) is disordered. Residues 145–158 (KRQDEKQKSIKKEI) are compositionally biased toward basic and acidic residues.

It belongs to the SmpB family.

It localises to the cytoplasm. Its function is as follows. Required for rescue of stalled ribosomes mediated by trans-translation. Binds to transfer-messenger RNA (tmRNA), required for stable association of tmRNA with ribosomes. tmRNA and SmpB together mimic tRNA shape, replacing the anticodon stem-loop with SmpB. tmRNA is encoded by the ssrA gene; the 2 termini fold to resemble tRNA(Ala) and it encodes a 'tag peptide', a short internal open reading frame. During trans-translation Ala-aminoacylated tmRNA acts like a tRNA, entering the A-site of stalled ribosomes, displacing the stalled mRNA. The ribosome then switches to translate the ORF on the tmRNA; the nascent peptide is terminated with the 'tag peptide' encoded by the tmRNA and targeted for degradation. The ribosome is freed to recommence translation, which seems to be the essential function of trans-translation. The chain is SsrA-binding protein from Prochlorococcus marinus (strain AS9601).